Reading from the N-terminus, the 149-residue chain is Transcriptional repressor NrdR (149 aa).

A zinc finger lies at 3–34; that stretch reads CPFCSENDTKVIDSRLVADGHQVRRRRQCLAC. Residues 49-139 enclose the ATP-cone domain; the sequence is PKVIKSNGNR…VYRSFEDIRE (91 aa).

It belongs to the NrdR family. Zn(2+) is required as a cofactor.

Its function is as follows. Negatively regulates transcription of bacterial ribonucleotide reductase nrd genes and operons by binding to NrdR-boxes. The sequence is that of Transcriptional repressor NrdR from Vibrio parahaemolyticus serotype O3:K6 (strain RIMD 2210633).